The primary structure comprises 253 residues: MDNRFATAFVIACVLSLISTIYMAASIGTDFWYEYRSPVQENSSDLNKSIWDEFISDEADEKTYNDALFRYNGTVGLWRRCITIPKNMHWYSPPERTESFDVVTKCVSFTLTEQFMEKFVDPGNHNSGIDLLRTYLWRCQFLLPFVSLGLMCFGALIGLCACICRSLYPTIATGILHLLAGLCTLGSVSCYVAGIELLHQKLELPDNVSGEFGWSFCLACVSAPLQFMASALFIWAAHTNRKEYTLMKAYRVA.

The chain crosses the membrane as a helical span at residues 5 to 25 (FATAFVIACVLSLISTIYMAA). N-linked (GlcNAc...) asparagine glycosylation is found at Asn42 and Asn72. 3 helical membrane passes run 141-161 (FLLPFVSLGLMCFGALIGLCA), 175-195 (ILHLLAGLCTLGSVSCYVAGI), and 216-236 (FCLACVSAPLQFMASALFIWA).

The protein belongs to the PMP-22/EMP/MP20 family. In terms of tissue distribution, widely distributed in the adult CNS with highest expression in the corpus callosum, caudate nucleus, cerebral cortex, medulla, putamen, spinal cord, substantia nigra and subthalamic nucleus. Weak expression was detected in the adult heart.

It localises to the cell junction. The protein resides in the tight junction. Its subcellular location is the cell membrane. In terms of biological role, plays a role in negatively regulating the permeability of cells to small molecules. The protein is Claudin domain-containing protein 1 (CLDND1) of Homo sapiens (Human).